The following is a 353-amino-acid chain: Photosystem II protein D1 (353 aa).

Thr2 is modified (N-acetylthreonine). At Thr2 the chain carries Phosphothreonine. Transmembrane regions (helical) follow at residues 29-46, 118-133, and 142-156; these read YIGW…TATS, HFFL…EWEL, and WIAV…AATA. His118 contributes to the chlorophyll a binding site. Pheophytin a is bound at residue Tyr126. 2 residues coordinate [CaMn4O5] cluster: Asp170 and Glu189. The helical transmembrane segment at 197–218 threads the bilayer; the sequence is FHMLGVAGVFGGSLFSAMHGSL. Residue His198 coordinates chlorophyll a. Residues His215 and 264–265 contribute to the a quinone site; that span reads SF. Residue His215 coordinates Fe cation. His272 is a Fe cation binding site. A helical transmembrane segment spans residues 274–288; the sequence is FLAAWPVVGIWFTAL. [CaMn4O5] cluster contacts are provided by His332, Glu333, Asp342, and Ala344. A propeptide spanning residues 345-353 is cleaved from the precursor; sequence VVEAPAVNG.

It belongs to the reaction center PufL/M/PsbA/D family. As to quaternary structure, PSII is composed of 1 copy each of membrane proteins PsbA, PsbB, PsbC, PsbD, PsbE, PsbF, PsbH, PsbI, PsbJ, PsbK, PsbL, PsbM, PsbT, PsbX, PsbY, PsbZ, Psb30/Ycf12, at least 3 peripheral proteins of the oxygen-evolving complex and a large number of cofactors. It forms dimeric complexes. The D1/D2 heterodimer binds P680, chlorophylls that are the primary electron donor of PSII, and subsequent electron acceptors. It shares a non-heme iron and each subunit binds pheophytin, quinone, additional chlorophylls, carotenoids and lipids. D1 provides most of the ligands for the Mn4-Ca-O5 cluster of the oxygen-evolving complex (OEC). There is also a Cl(-1) ion associated with D1 and D2, which is required for oxygen evolution. The PSII complex binds additional chlorophylls, carotenoids and specific lipids. serves as cofactor. Tyr-161 forms a radical intermediate that is referred to as redox-active TyrZ, YZ or Y-Z. In terms of processing, C-terminally processed by CTPA; processing is essential to allow assembly of the oxygen-evolving complex and thus photosynthetic growth.

It localises to the plastid. Its subcellular location is the chloroplast thylakoid membrane. It carries out the reaction 2 a plastoquinone + 4 hnu + 2 H2O = 2 a plastoquinol + O2. Functionally, photosystem II (PSII) is a light-driven water:plastoquinone oxidoreductase that uses light energy to abstract electrons from H(2)O, generating O(2) and a proton gradient subsequently used for ATP formation. It consists of a core antenna complex that captures photons, and an electron transfer chain that converts photonic excitation into a charge separation. The D1/D2 (PsbA/PsbD) reaction center heterodimer binds P680, the primary electron donor of PSII as well as several subsequent electron acceptors. This is Photosystem II protein D1 from Chlorella vulgaris (Green alga).